The sequence spans 1082 residues: TNF receptor-associated factor homolog 1b (1082 aa).

The segment at 1–54 is disordered; the sequence is MAEAVDEDSGVGRSLEESSNGQHSQAGEALSEWRSSGQVENGTPSTSPSYWDID. N-acetylalanine is present on Ala2. The span at 33–49 shows a compositional bias: polar residues; that stretch reads WRSSGQVENGTPSTSPS. Positions 67–198 constitute an MATH domain; the sequence is YGQYTWKIPK…SGCLTIEAKV (132 aa). 6 disordered regions span residues 358-388, 440-666, 697-762, 780-800, 812-841, and 858-889; these read LPPK…ERDE, TEQR…SNVG, SIVN…QVVL, LSAP…APII, SSVQ…NQQT, and SSSS…PTSS. Basic and acidic residues-rich tracts occupy residues 359–388 and 440–453; these read PPKD…ERDE and TEQR…EREK. The stretch at 446–507 forms a coiled coil; it reads RGAAEREKKS…EEEKDSVTEK (62 aa). The span at 454-471 shows a compositional bias: basic residues; it reads KSKKKQAKQKRNKNKGKD. The segment covering 472–488 has biased composition (basic and acidic residues); it reads KRKEEKVSFATHAKDLE. Composition is skewed to low complexity over residues 519–534 and 560–573; these read GDVS…SADI and SSEG…ISIS. Composition is skewed to polar residues over residues 588–630 and 645–666; these read DDSS…QQVK and QPST…SNVG. Low complexity-rich tracts occupy residues 858 to 871 and 878 to 889; these read SSSS…SSHG and PSSSYSQAPTSS.

In terms of assembly, forms homooligomers. Interacts with SNC1, RPS2 and CPR1/CPR30. Interacts with ATG6.

The protein resides in the cytoplasm. The protein localises to the cell membrane. Its function is as follows. Functions redundantly with TRAF1A in the regulation of plant immune response. Contributes to the turnover of the nucleotide-binding domain and leucine-rich repeat-containing (NB-LRR) immune receptors SNC1 and RPS2. May associate with an E3 ubiquitin-protein ligase complex, which modulates ubiquitination and subsequent degradation of NB-LRR immune sensors to maintain their homeostasis. Functions redundantly with TRAF1A in the regulation of autophagosome formation. Required for SINAT1- and SINAT2-mediated ubiquitination and destabilization of ATG6. Functions as a molecular adapter that helps to regulate autophagy by modulating ATG6 stability. The protein is TNF receptor-associated factor homolog 1b of Arabidopsis thaliana (Mouse-ear cress).